The sequence spans 159 residues: Cytochrome b6-f complex subunit 4 (159 aa).

The next 3 membrane-spanning stretches (helical) occupy residues 35-55, 93-113, and 127-147; these read ILIFGVVILGTIFGVIALAVL, LLGVVLMAAIPIGLALVPFIE, and ATAVFLIGTVVTMYLGIGAMI.

This sequence belongs to the cytochrome b family. PetD subfamily. In terms of assembly, the 4 large subunits of the cytochrome b6-f complex are cytochrome b6, subunit IV (17 kDa polypeptide, PetD), cytochrome f and the Rieske protein, while the 4 small subunits are PetG, PetL, PetM and PetN. The complex functions as a dimer.

It localises to the cell inner membrane. Its function is as follows. Component of the cytochrome b6-f complex, which mediates electron transfer between photosystem II (PSII) and photosystem I (PSI), cyclic electron flow around PSI, and state transitions. This Gloeobacter violaceus (strain ATCC 29082 / PCC 7421) protein is Cytochrome b6-f complex subunit 4.